We begin with the raw amino-acid sequence, 338 residues long: Glyceraldehyde-3-phosphate dehydrogenase (338 aa).

NAD(+)-binding positions include 12–13, D34, and R79; that span reads RI. Residues 150-152, T181, 210-211, and R233 contribute to the D-glyceraldehyde 3-phosphate site; these read SCT and TG. Catalysis depends on C151, which acts as the Nucleophile. Residue N315 coordinates NAD(+).

Belongs to the glyceraldehyde-3-phosphate dehydrogenase family. Homotetramer.

Its subcellular location is the cytoplasm. The enzyme catalyses D-glyceraldehyde 3-phosphate + phosphate + NAD(+) = (2R)-3-phospho-glyceroyl phosphate + NADH + H(+). Its pathway is carbohydrate degradation; glycolysis; pyruvate from D-glyceraldehyde 3-phosphate: step 1/5. This is Glyceraldehyde-3-phosphate dehydrogenase (gpd-1) from Neurospora crassa (strain ATCC 24698 / 74-OR23-1A / CBS 708.71 / DSM 1257 / FGSC 987).